A 318-amino-acid chain; its full sequence is DNA-directed RNA polymerase subunit alpha 2 (318 aa).

An alpha N-terminal domain (alpha-NTD) region spans residues 1 to 227; that stretch reads MALENLLHPT…NQLRNILDIE (227 aa). Positions 242–318 are alpha C-terminal domain (alpha-CTD); it reads INPILLKHVE…TLIENWPQDL (77 aa).

This sequence belongs to the RNA polymerase alpha chain family. Homodimer. The RNAP catalytic core consists of 2 alpha, 1 beta, 1 beta' and 1 omega subunit. When a sigma factor is associated with the core the holoenzyme is formed, which can initiate transcription.

It catalyses the reaction RNA(n) + a ribonucleoside 5'-triphosphate = RNA(n+1) + diphosphate. DNA-dependent RNA polymerase catalyzes the transcription of DNA into RNA using the four ribonucleoside triphosphates as substrates. In Francisella tularensis subsp. tularensis (strain FSC 198), this protein is DNA-directed RNA polymerase subunit alpha 2.